Here is a 49-residue protein sequence, read N- to C-terminus: Large ribosomal subunit protein bL33 (49 aa).

It belongs to the bacterial ribosomal protein bL33 family.

This chain is Large ribosomal subunit protein bL33, found in Streptococcus gordonii (strain Challis / ATCC 35105 / BCRC 15272 / CH1 / DL1 / V288).